Here is a 340-residue protein sequence, read N- to C-terminus: PRKC apoptosis WT1 regulator protein (340 aa).

Residues 1-18 (MATGGYRTSSGLGGSTTD) show a composition bias toward polar residues. Residues 1–253 (MATGGYRTSS…TDRSGFPRYN (253 aa)) are disordered. Over residues 47 to 82 (SDAAGKPPAGALGTPAAAAANELNNNLPGGAPAAPA) the composition is skewed to low complexity. The short motif at 68 to 72 (ELNNN) is the B30.2/SPRY domain-binding motif element. S108 is subject to Phosphoserine. The short motif at 145–161 (RKGKGQIEKRKLREKRR) is the Nuclear localization signal element. The interval 145-203 (RKGKGQIEKRKLREKRRSTGVVNIPAAECLDEYEDDEAGQKERKREDAITQQNTIQNEA) is selective for apoptosis induction in cancer cells (SAC). T163 carries the phosphothreonine; by PKA modification. Positions 182–192 (AGQKERKREDA) are enriched in basic and acidic residues. Positions 186–206 (ERKREDAITQQNTIQNEAVNL) form a coiled coil. The span at 193 to 203 (ITQQNTIQNEA) shows a compositional bias: polar residues. S231 is modified (phosphoserine). Residues 242 to 253 (SRTDRSGFPRYN) are compositionally biased toward basic and acidic residues. Positions 300-340 (IGKLKEEIDLLNRDLDDIEDENEQLKQENKTLLKVVGQLTR) are leucine-zipper.

In terms of assembly, homooligomer. Interacts (via the C-terminal region) with WT1. Interacts with THAP1. Interacts with AATF. Interacts with BACE1. Interacts with SPSB1 (via B30.2/SPRY domain); this interaction is direct and occurs in association with the Elongin BC complex. Interacts with SPSB2 (via B30.2/SPRY domain); this interaction occurs in association with the Elongin BC complex. Interacts with SPSB4 (via B30.2/SPRY domain); this interaction occurs in association with the Elongin BC complex. Component of a ternary complex composed of SQSTM1 and PRKCZ. Interacts with actin. Preferentially phosphorylated at the Thr-163 by PKC in cancer cells. Widely expressed. Expression is elevated in various neurodegenerative diseases such as amyotrophic lateral sclerosis, Alzheimer, Parkinson and Huntington diseases and stroke. Down-regulated in several cancers.

The protein resides in the cytoplasm. It is found in the nucleus. Functionally, pro-apoptotic protein capable of selectively inducing apoptosis in cancer cells, sensitizing the cells to diverse apoptotic stimuli and causing regression of tumors in animal models. Induces apoptosis in certain cancer cells by activation of the Fas prodeath pathway and coparallel inhibition of NF-kappa-B transcriptional activity. Inhibits the transcriptional activation and augments the transcriptional repression mediated by WT1. Down-regulates the anti-apoptotic protein BCL2 via its interaction with WT1. Also seems to be a transcriptional repressor by itself. May be directly involved in regulating the amyloid precursor protein (APP) cleavage activity of BACE1. The polypeptide is PRKC apoptosis WT1 regulator protein (PAWR) (Homo sapiens (Human)).